A 560-amino-acid chain; its full sequence is Phenol regulator MopR (560 aa).

Residues His-106 and Trp-134 each contribute to the phenol site. Zn(2+)-binding residues include Cys-155, Glu-178, Cys-181, and Cys-189. A Sigma-54 factor interaction domain is found at 245 to 474 (AVGESVAYRK…LENLLERATL (230 aa)). ATP is bound by residues 273–280 (GETGVGKE) and 336–345 (AHGGTIFLDE).

Homodimer.

With respect to regulation, activity is triggered by phenol binding. Its function is as follows. Involved in the regulation of the phenol degradation pathway. Activates phenol hydroxylase expression in the presence of phenol. In Acinetobacter guillouiae (Acinetobacter genomosp. 11), this protein is Phenol regulator MopR.